A 328-amino-acid chain; its full sequence is Malate dehydrogenase (328 aa).

11–17 is an NAD(+) binding site; it reads GAAGQIG. Positions 92 and 98 each coordinate substrate. Residues asparagine 105, glutamine 112, and 129–131 contribute to the NAD(+) site; that span reads VGN. Asparagine 131 and arginine 162 together coordinate substrate. Histidine 187 functions as the Proton acceptor in the catalytic mechanism.

It belongs to the LDH/MDH superfamily. MDH type 2 family.

It carries out the reaction (S)-malate + NAD(+) = oxaloacetate + NADH + H(+). Catalyzes the reversible oxidation of malate to oxaloacetate. This chain is Malate dehydrogenase, found in Coxiella burnetii (strain RSA 493 / Nine Mile phase I).